Reading from the N-terminus, the 542-residue chain is CTP synthase (542 aa).

The interval 1 to 265 (MTRYIFVTGG…DEIIVERFGL (265 aa)) is amidoligase domain. Ser-13 is a binding site for CTP. UTP is bound at residue Ser-13. ATP contacts are provided by residues 14–19 (SLGKGI) and Asp-71. Mg(2+)-binding residues include Asp-71 and Glu-139. Residues 146 to 148 (DIE), 186 to 191 (KTKPTQ), and Lys-222 each bind CTP. Residues 186 to 191 (KTKPTQ) and Lys-222 contribute to the UTP site. A Glutamine amidotransferase type-1 domain is found at 290 to 541 (TIAMVGKYME…VRAALENAGG (252 aa)). Gly-351 contributes to the L-glutamine binding site. The Nucleophile; for glutamine hydrolysis role is filled by Cys-378. Residues 379–382 (LGLQ), Glu-402, and Arg-469 each bind L-glutamine. Residues His-514 and Glu-516 contribute to the active site.

It belongs to the CTP synthase family. In terms of assembly, homotetramer.

It catalyses the reaction UTP + L-glutamine + ATP + H2O = CTP + L-glutamate + ADP + phosphate + 2 H(+). The enzyme catalyses L-glutamine + H2O = L-glutamate + NH4(+). It carries out the reaction UTP + NH4(+) + ATP = CTP + ADP + phosphate + 2 H(+). It participates in pyrimidine metabolism; CTP biosynthesis via de novo pathway; CTP from UDP: step 2/2. Allosterically activated by GTP, when glutamine is the substrate; GTP has no effect on the reaction when ammonia is the substrate. The allosteric effector GTP functions by stabilizing the protein conformation that binds the tetrahedral intermediate(s) formed during glutamine hydrolysis. Inhibited by the product CTP, via allosteric rather than competitive inhibition. In terms of biological role, catalyzes the ATP-dependent amination of UTP to CTP with either L-glutamine or ammonia as the source of nitrogen. Regulates intracellular CTP levels through interactions with the four ribonucleotide triphosphates. This is CTP synthase from Hahella chejuensis (strain KCTC 2396).